A 1167-amino-acid polypeptide reads, in one-letter code: Cytotoxicity-associated immunodominant antigen (1167 aa).

The disordered stretch occupies residues 632-651 (VAKNLESKSGNKNKMEAKSQ).

In terms of biological role, may be necessary for the transcription, folding, export, or function of the cytotoxin. The sequence is that of Cytotoxicity-associated immunodominant antigen (cagA) from Helicobacter pylori (strain J99 / ATCC 700824) (Campylobacter pylori J99).